Here is a 255-residue protein sequence, read N- to C-terminus: 5'-nucleotidase SurE (255 aa).

D8, D9, S40, and N93 together coordinate a divalent metal cation.

It belongs to the SurE nucleotidase family. The cofactor is a divalent metal cation.

The protein localises to the cytoplasm. The catalysed reaction is a ribonucleoside 5'-phosphate + H2O = a ribonucleoside + phosphate. Functionally, nucleotidase that shows phosphatase activity on nucleoside 5'-monophosphates. The protein is 5'-nucleotidase SurE of Rhodopseudomonas palustris (strain HaA2).